The sequence spans 504 residues: Ribosomal protein uS12 methylthiotransferase RimO (504 aa).

Positions 19–135 (KKVGFVSLGC…ILAASGIEPR (117 aa)) constitute an MTTase N-terminal domain. Cysteine 28, cysteine 64, cysteine 98, cysteine 214, cysteine 218, and cysteine 221 together coordinate [4Fe-4S] cluster. Positions 200–430 (ATPKYMAYIK…MSLQKQISKK (231 aa)) constitute a Radical SAM core domain. One can recognise a TRAM domain in the interval 433 to 504 (KALIGREFDV…HDYDLVARLL (72 aa)).

Belongs to the methylthiotransferase family. RimO subfamily. The cofactor is [4Fe-4S] cluster.

The protein resides in the cytoplasm. The catalysed reaction is L-aspartate(89)-[ribosomal protein uS12]-hydrogen + (sulfur carrier)-SH + AH2 + 2 S-adenosyl-L-methionine = 3-methylsulfanyl-L-aspartate(89)-[ribosomal protein uS12]-hydrogen + (sulfur carrier)-H + 5'-deoxyadenosine + L-methionine + A + S-adenosyl-L-homocysteine + 2 H(+). Functionally, catalyzes the methylthiolation of an aspartic acid residue of ribosomal protein uS12. In Koribacter versatilis (strain Ellin345), this protein is Ribosomal protein uS12 methylthiotransferase RimO.